We begin with the raw amino-acid sequence, 302 residues long: Vacuolar protein sorting-associated protein 26A (302 aa).

The protein belongs to the VPS26 family. Component of the retromer complex which consists of VPS29 (MAG1), VPS26 (VPS26A or VPS26B), VPS35 (VPS35A or VPS35B or VPS35C), VPS5/17 (SNX1 or SNX2A or SNX2B). Component of a retromer subcomplex consisting of VPS29 (MAG1), VPS26 (VPS26A or VPS26B), VPS35 (VPS35A or VPS35B or VPS35C).

The protein localises to the cytoplasm. It localises to the endosome membrane. It is found in the prevacuolar compartment membrane. Its subcellular location is the golgi apparatus. The protein resides in the trans-Golgi network membrane. Plays a role in vesicular protein sorting. Component of the membrane-associated retromer complex which is essential in endosome-to-Golgi retrograde transport. The VPS29-VPS26-VPS35 subcomplex may be involved in recycling of specific cargos from endosome to the plasma membrane. The protein is Vacuolar protein sorting-associated protein 26A (VPS26A) of Arabidopsis thaliana (Mouse-ear cress).